The chain runs to 229 residues: ATP-dependent Clp protease proteolytic subunit 1 (229 aa).

The active-site Nucleophile is the serine 129. Histidine 154 is an active-site residue.

Belongs to the peptidase S14 family. In terms of assembly, fourteen ClpP subunits assemble into 2 heptameric rings which stack back to back to give a disk-like structure with a central cavity, resembling the structure of eukaryotic proteasomes.

The protein localises to the cytoplasm. The enzyme catalyses Hydrolysis of proteins to small peptides in the presence of ATP and magnesium. alpha-casein is the usual test substrate. In the absence of ATP, only oligopeptides shorter than five residues are hydrolyzed (such as succinyl-Leu-Tyr-|-NHMec, and Leu-Tyr-Leu-|-Tyr-Trp, in which cleavage of the -Tyr-|-Leu- and -Tyr-|-Trp bonds also occurs).. Cleaves peptides in various proteins in a process that requires ATP hydrolysis. Has a chymotrypsin-like activity. Plays a major role in the degradation of misfolded proteins. The sequence is that of ATP-dependent Clp protease proteolytic subunit 1 from Thermosynechococcus vestitus (strain NIES-2133 / IAM M-273 / BP-1).